The following is a 75-amino-acid chain: MIGDILLFGTLLMNAGAVLNFKLKKKDTQGFGEESKEPSTGDNIREFLLSLRYFRIFIALWNVFMMLCMIVLFGS.

The N-terminal stretch at 1-17 (MIGDILLFGTLLMNAGA) is a signal peptide. Residues 18 to 53 (VLNFKLKKKDTQGFGEESKEPSTGDNIREFLLSLRY) are Extracellular-facing. A helical transmembrane segment spans residues 54-74 (FRIFIALWNVFMMLCMIVLFG). Position 75 (S75) is a topological domain, cytoplasmic.

The protein belongs to the SMIM7 family.

The protein resides in the membrane. This Mus musculus (Mouse) protein is Small integral membrane protein 7 (Smim7).